The chain runs to 207 residues: Outer-membrane lipoprotein LolB (207 aa).

Residues 1-21 (MPMRKRHFYRLLPLASLLLAA) form the signal peptide. Cysteine 22 is lipidated: N-palmitoyl cysteine. Residue cysteine 22 is the site of S-diacylglycerol cysteine attachment.

This sequence belongs to the LolB family. As to quaternary structure, monomer.

The protein localises to the cell outer membrane. Functionally, plays a critical role in the incorporation of lipoproteins in the outer membrane after they are released by the LolA protein. The protein is Outer-membrane lipoprotein LolB of Yersinia pseudotuberculosis serotype O:1b (strain IP 31758).